The chain runs to 234 residues: Mediator of RNA polymerase II transcription subunit 4 (234 aa).

Residues His71 to Glu124 are a coiled coil. A disordered region spans residues Gly188–Asp234. Over residues Val189–Asp217 the composition is skewed to basic and acidic residues.

The protein belongs to the Mediator complex subunit 4 family. As to quaternary structure, component of the Mediator complex.

It localises to the nucleus. Component of the Mediator complex, a coactivator involved in the regulated transcription of nearly all RNA polymerase II-dependent genes. Mediator functions as a bridge to convey information from gene-specific regulatory proteins to the basal RNA polymerase II transcription machinery. Mediator is recruited to promoters by direct interactions with regulatory proteins and serves as a scaffold for the assembly of a functional preinitiation complex with RNA polymerase II and the general transcription factors. This is Mediator of RNA polymerase II transcription subunit 4 (MED4) from Cryptococcus neoformans var. neoformans serotype D (strain B-3501A) (Filobasidiella neoformans).